The primary structure comprises 309 residues: 4-hydroxy-3-methylbut-2-enyl diphosphate reductase (309 aa).

Cys12 provides a ligand contact to [4Fe-4S] cluster. (2E)-4-hydroxy-3-methylbut-2-enyl diphosphate contacts are provided by His41 and His74. His41 and His74 together coordinate dimethylallyl diphosphate. Residues His41 and His74 each contribute to the isopentenyl diphosphate site. Cys96 contributes to the [4Fe-4S] cluster binding site. His124 contacts (2E)-4-hydroxy-3-methylbut-2-enyl diphosphate. His124 contributes to the dimethylallyl diphosphate binding site. His124 lines the isopentenyl diphosphate pocket. Glu126 serves as the catalytic Proton donor. Thr167 contacts (2E)-4-hydroxy-3-methylbut-2-enyl diphosphate. Cys197 serves as a coordination point for [4Fe-4S] cluster. Ser225, Ser226, Asn227, and Ser269 together coordinate (2E)-4-hydroxy-3-methylbut-2-enyl diphosphate. Dimethylallyl diphosphate contacts are provided by Ser225, Ser226, Asn227, and Ser269. Ser225, Ser226, Asn227, and Ser269 together coordinate isopentenyl diphosphate.

This sequence belongs to the IspH family. Requires [4Fe-4S] cluster as cofactor.

The catalysed reaction is isopentenyl diphosphate + 2 oxidized [2Fe-2S]-[ferredoxin] + H2O = (2E)-4-hydroxy-3-methylbut-2-enyl diphosphate + 2 reduced [2Fe-2S]-[ferredoxin] + 2 H(+). It catalyses the reaction dimethylallyl diphosphate + 2 oxidized [2Fe-2S]-[ferredoxin] + H2O = (2E)-4-hydroxy-3-methylbut-2-enyl diphosphate + 2 reduced [2Fe-2S]-[ferredoxin] + 2 H(+). It participates in isoprenoid biosynthesis; dimethylallyl diphosphate biosynthesis; dimethylallyl diphosphate from (2E)-4-hydroxy-3-methylbutenyl diphosphate: step 1/1. It functions in the pathway isoprenoid biosynthesis; isopentenyl diphosphate biosynthesis via DXP pathway; isopentenyl diphosphate from 1-deoxy-D-xylulose 5-phosphate: step 6/6. In terms of biological role, catalyzes the conversion of 1-hydroxy-2-methyl-2-(E)-butenyl 4-diphosphate (HMBPP) into a mixture of isopentenyl diphosphate (IPP) and dimethylallyl diphosphate (DMAPP). Acts in the terminal step of the DOXP/MEP pathway for isoprenoid precursor biosynthesis. This chain is 4-hydroxy-3-methylbut-2-enyl diphosphate reductase, found in Shewanella pealeana (strain ATCC 700345 / ANG-SQ1).